A 99-amino-acid chain; its full sequence is Aspartyl/glutamyl-tRNA(Asn/Gln) amidotransferase subunit C (99 aa).

This sequence belongs to the GatC family. Heterotrimer of A, B and C subunits.

It carries out the reaction L-glutamyl-tRNA(Gln) + L-glutamine + ATP + H2O = L-glutaminyl-tRNA(Gln) + L-glutamate + ADP + phosphate + H(+). The enzyme catalyses L-aspartyl-tRNA(Asn) + L-glutamine + ATP + H2O = L-asparaginyl-tRNA(Asn) + L-glutamate + ADP + phosphate + 2 H(+). Allows the formation of correctly charged Asn-tRNA(Asn) or Gln-tRNA(Gln) through the transamidation of misacylated Asp-tRNA(Asn) or Glu-tRNA(Gln) in organisms which lack either or both of asparaginyl-tRNA or glutaminyl-tRNA synthetases. The reaction takes place in the presence of glutamine and ATP through an activated phospho-Asp-tRNA(Asn) or phospho-Glu-tRNA(Gln). This chain is Aspartyl/glutamyl-tRNA(Asn/Gln) amidotransferase subunit C, found in Sulfurihydrogenibium sp. (strain YO3AOP1).